We begin with the raw amino-acid sequence, 105 residues long: Thiosulfate sulfurtransferase GlpE (105 aa).

Positions 15–103 (MQQGAILVDI…WCRAELPIDT (89 aa)) constitute a Rhodanese domain. Cysteine 63 serves as the catalytic Cysteine persulfide intermediate.

The protein belongs to the GlpE family.

It is found in the cytoplasm. The catalysed reaction is thiosulfate + hydrogen cyanide = thiocyanate + sulfite + 2 H(+). The enzyme catalyses thiosulfate + [thioredoxin]-dithiol = [thioredoxin]-disulfide + hydrogen sulfide + sulfite + 2 H(+). Its function is as follows. Transferase that catalyzes the transfer of sulfur from thiosulfate to thiophilic acceptors such as cyanide or dithiols. May function in a CysM-independent thiosulfate assimilation pathway by catalyzing the conversion of thiosulfate to sulfite, which can then be used for L-cysteine biosynthesis. This is Thiosulfate sulfurtransferase GlpE from Haemophilus influenzae (strain 86-028NP).